We begin with the raw amino-acid sequence, 201 residues long: Large ribosomal subunit protein uL4 (201 aa).

The interval 51-73 is disordered; the sequence is EVTGSGKKPWRQKGTGRARAGSV.

It belongs to the universal ribosomal protein uL4 family. In terms of assembly, part of the 50S ribosomal subunit.

In terms of biological role, one of the primary rRNA binding proteins, this protein initially binds near the 5'-end of the 23S rRNA. It is important during the early stages of 50S assembly. It makes multiple contacts with different domains of the 23S rRNA in the assembled 50S subunit and ribosome. Forms part of the polypeptide exit tunnel. This chain is Large ribosomal subunit protein uL4, found in Erwinia tasmaniensis (strain DSM 17950 / CFBP 7177 / CIP 109463 / NCPPB 4357 / Et1/99).